The chain runs to 443 residues: MPASARWQALQEVSILNTGAELPWGGKFSGVAKLIDDAFDAIEKDNEKLKGVLQRISGYAVNEDTLRGLIILFSDTHFTRPTYNGEPVHLGAKDILGHVYEYFLSRFAQAEGKRSGQYFTPKSIVSLIVEMLEPYSGRVYDPAMGSGGFFVQTERFITAHQGNINNVSIYGQEFNPTTWKLAAMNMAIRGIDYDFGKYNADSFTQPQHIDKKMDFIMANPHFNDKEWWNESLADDPRWAYGTPPKGNANFAWLQHMIYHLSPNGKIALLLANGSMSSQTNNEGEIRKAIINADLVECMVALPGQLFTNTKIPACIWFLNRNKKRKGEVLFIDARQIGYMKDRVLRDFTADDIAKIADTLHAWQTSDGYEDQAAFCKSATLEEIKNNDFVLTPGRYVGTAEQEDDGVPFAEKMQNLTALLKEQFAKSAELEAEIKKNLGGLGYE.

S-adenosyl-L-methionine contacts are provided by residues 117–122, 146–148, and Glu173; these read QYFTPK and SGG.

Belongs to the N(4)/N(6)-methyltransferase family. As to quaternary structure, the type I restriction/modification system is composed of three polypeptides R, M and S; the restriction enzyme has stoichiometry R(2)M(2)S(1) while the methyltransferase is M(2)S(1).

The catalysed reaction is a 2'-deoxyadenosine in DNA + S-adenosyl-L-methionine = an N(6)-methyl-2'-deoxyadenosine in DNA + S-adenosyl-L-homocysteine + H(+). Its function is as follows. The subtype gamma methyltransferase (M) subunit of a type I restriction enzyme. The M and S subunits together form a methyltransferase (MTase) that methylates adenosines in the sequence 5'-RAACN(5)TAG-3'. Methylation protects against cleavage by HindI. In the presence of the R subunit the complex can also act as an endonuclease, binding to the same target sequence but cutting the DNA some distance from this site. Whether the DNA is cut or modified depends on the methylation state of the target sequence. When the target site is unmodified, the DNA is cut. When the target site is hemimethylated, the complex acts as a maintenance MTase modifying the DNA so that both strands become methylated. After locating a non-methylated recognition site, the enzyme complex serves as a molecular motor that translocates DNA in an ATP-dependent manner until a collision occurs that triggers cleavage. The chain is Type I restriction enzyme HindI methylase subunit from Haemophilus influenzae (strain ATCC 51907 / DSM 11121 / KW20 / Rd).